Consider the following 99-residue polypeptide: Pyruvate synthase subunit PorD (99 aa).

2 4Fe-4S ferredoxin-type domains span residues 32 to 60 (MRPILHKEKCIDCMFCWLYCPDQAIIQEG) and 61 to 91 (GIMKGFNYDYCKGCGLCANVCPKQAIEMRPE). Residues Cys41, Cys44, Cys47, Cys51, Cys71, Cys74, Cys77, and Cys81 each coordinate [4Fe-4S] cluster.

In terms of assembly, heterotetramer of one alpha, one beta, one delta and one gamma chain. The cofactor is [4Fe-4S] cluster.

In Thermotoga maritima (strain ATCC 43589 / DSM 3109 / JCM 10099 / NBRC 100826 / MSB8), this protein is Pyruvate synthase subunit PorD (porD).